The chain runs to 227 residues: ATP synthase F(0) complex subunit a (227 aa).

Transmembrane regions (helical) follow at residues 13 to 33, 69 to 89, 98 to 118, 132 to 152, 179 to 199, and 202 to 222; these read YLLG…LFPA, WALL…LGLL, QLSL…IIGM, EGTP…SLFI, VFVL…VLFL, and LLEV…LSLY.

Belongs to the ATPase A chain family. Component of the ATP synthase complex composed at least of ATP5F1A/subunit alpha, ATP5F1B/subunit beta, ATP5MC1/subunit c (homooctomer), MT-ATP6/subunit a, MT-ATP8/subunit 8, ATP5ME/subunit e, ATP5MF/subunit f, ATP5MG/subunit g, ATP5MK/subunit k, ATP5MJ/subunit j, ATP5F1C/subunit gamma, ATP5F1D/subunit delta, ATP5F1E/subunit epsilon, ATP5PF/subunit F6, ATP5PB/subunit b, ATP5PD/subunit d, ATP5PO/subunit OSCP. ATP synthase complex consists of a soluble F(1) head domain (subunits alpha(3) and beta(3)) - the catalytic core - and a membrane F(0) domain - the membrane proton channel (subunits c, a, 8, e, f, g, k and j). These two domains are linked by a central stalk (subunits gamma, delta, and epsilon) rotating inside the F1 region and a stationary peripheral stalk (subunits F6, b, d, and OSCP). Interacts with DNAJC30; interaction is direct.

It is found in the mitochondrion inner membrane. It carries out the reaction H(+)(in) = H(+)(out). Subunit a, of the mitochondrial membrane ATP synthase complex (F(1)F(0) ATP synthase or Complex V) that produces ATP from ADP in the presence of a proton gradient across the membrane which is generated by electron transport complexes of the respiratory chain. ATP synthase complex consist of a soluble F(1) head domain - the catalytic core - and a membrane F(1) domain - the membrane proton channel. These two domains are linked by a central stalk rotating inside the F(1) region and a stationary peripheral stalk. During catalysis, ATP synthesis in the catalytic domain of F(1) is coupled via a rotary mechanism of the central stalk subunits to proton translocation. With the subunit c (ATP5MC1), forms the proton-conducting channel in the F(0) domain, that contains two crucial half-channels (inlet and outlet) that facilitate proton movement from the mitochondrial intermembrane space (IMS) into the matrix. Protons are taken up via the inlet half-channel and released through the outlet half-channel, following a Grotthuss mechanism. This chain is ATP synthase F(0) complex subunit a, found in Danio rerio (Zebrafish).